The following is a 598-amino-acid chain: Aspartate--tRNA(Asp/Asn) ligase (598 aa).

Glu-170 provides a ligand contact to L-aspartate. An aspartate region spans residues 194–197; that stretch reads QLFK. Arg-216 provides a ligand contact to L-aspartate. ATP contacts are provided by residues 216–218 and Gln-225; that span reads RDE. Residue His-448 coordinates L-aspartate. Glu-482 serves as a coordination point for ATP. Arg-489 serves as a coordination point for L-aspartate. ATP is bound at residue 534 to 537; the sequence is GWDR. Residues 558 to 598 are disordered; it reads GGGVDPLTDAPAPITPQQRKESGIDAKPREDKPKEDAKSKA. Over residues 575 to 598 the composition is skewed to basic and acidic residues; that stretch reads QRKESGIDAKPREDKPKEDAKSKA.

This sequence belongs to the class-II aminoacyl-tRNA synthetase family. Type 1 subfamily. In terms of assembly, homodimer.

The protein resides in the cytoplasm. The enzyme catalyses tRNA(Asx) + L-aspartate + ATP = L-aspartyl-tRNA(Asx) + AMP + diphosphate. Aspartyl-tRNA synthetase with relaxed tRNA specificity since it is able to aspartylate not only its cognate tRNA(Asp) but also tRNA(Asn). Reaction proceeds in two steps: L-aspartate is first activated by ATP to form Asp-AMP and then transferred to the acceptor end of tRNA(Asp/Asn). This chain is Aspartate--tRNA(Asp/Asn) ligase, found in Mycolicibacterium smegmatis (strain ATCC 700084 / mc(2)155) (Mycobacterium smegmatis).